A 722-amino-acid chain; its full sequence is Biotin--protein ligase (722 aa).

Residues 27–93 (KELGKASDKQ…EPAADGDPGL (67 aa)) are disordered. A compositionally biased stretch (low complexity) spans 46–55 (ASPEAQPAQG). Residue serine 295 is modified to Phosphoserine. The BPL/LPL catalytic domain occupies 459-648 (TRLGKVILFA…VLEKLIDRFQ (190 aa)).

This sequence belongs to the biotin--protein ligase family. Monomer.

It is found in the cytoplasm. It localises to the mitochondrion. The catalysed reaction is apo-[methylmalonyl-CoA:pyruvate carboxytransferase] + biotin + ATP = holo-[methylmalonyl-CoA:pyruvate carboxytransferase] + AMP + diphosphate + H(+). It carries out the reaction apo-[propionyl-CoA:carbon-dioxide ligase (ADP-forming)] + biotin + ATP = holo-[propionyl-CoA:carbon-dioxide ligase (ADP-forming)] + AMP + diphosphate + H(+). It catalyses the reaction apo-[3-methylcrotonoyl-CoA:carbon-dioxide ligase (ADP-forming)] + biotin + ATP = holo-[3-methylcrotonoyl-CoA:carbon-dioxide ligase (ADP-forming)] + AMP + diphosphate + H(+). The enzyme catalyses biotin + L-lysyl-[protein] + ATP = N(6)-biotinyl-L-lysyl-[protein] + AMP + diphosphate + H(+). Its function is as follows. Biotin--protein ligase catalyzing the biotinylation of the 4 biotin-dependent carboxylases acetyl-CoA-carboxylase, pyruvate carboxylase, propionyl-CoA carboxylase, and methylcrotonyl-CoA carboxylase. This Mus musculus (Mouse) protein is Biotin--protein ligase.